Consider the following 88-residue polypeptide: Large ribosomal subunit protein eL37 (88 aa).

Cysteine 19, cysteine 22, cysteine 34, and cysteine 37 together coordinate Zn(2+). The C4-type zinc finger occupies 19 to 37; sequence CNRCGKRSFHVQKKTCASC.

It belongs to the eukaryotic ribosomal protein eL37 family. It depends on Zn(2+) as a cofactor.

Binds to the 23S rRNA. The polypeptide is Large ribosomal subunit protein eL37 (RPL37) (Debaryomyces hansenii (strain ATCC 36239 / CBS 767 / BCRC 21394 / JCM 1990 / NBRC 0083 / IGC 2968) (Yeast)).